Reading from the N-terminus, the 408-residue chain is CST complex subunit STN1 (408 aa).

The tract at residues 8-195 (MQCESSPKEE…KVYDQPFRNP (188 aa)) is interaction with CTC1. A DNA-binding region (OB) is located at residues 64 to 165 (VDIMGAVISV…EICATIYYKV (102 aa)). Winged helix-turn-helix (wHTH) regions lie at residues 201–304 (EALN…YVTS) and 305–408 (KDKD…YTAF).

This sequence belongs to the STN1 family. In terms of assembly, component of the CST complex, composed of TEN1/C17orf106, CTC1/C17orf68 and STN1; in the complex interacts directly with TEN1 and CTC1. Interacts with ACD/TPP1, POT1 and POLA1.

The protein localises to the nucleus. It localises to the chromosome. The protein resides in the telomere. Functionally, component of the CST complex proposed to act as a specialized replication factor promoting DNA replication under conditions of replication stress or natural replication barriers such as the telomere duplex. The CST complex binds single-stranded DNA with high affinity in a sequence-independent manner, while isolated subunits bind DNA with low affinity by themselves. Initially the CST complex has been proposed to protect telomeres from DNA degradation. However, the CST complex has been shown to be involved in several aspects of telomere replication. The CST complex inhibits telomerase and is involved in telomere length homeostasis; it is proposed to bind to newly telomerase-synthesized 3' overhangs and to terminate telomerase action implicating the association with the ACD:POT1 complex thus interfering with its telomerase stimulation activity. The CST complex is also proposed to be involved in fill-in synthesis of the telomeric C-strand probably implicating recruitment and activation of DNA polymerase alpha. The CST complex facilitates recovery from many forms of exogenous DNA damage; seems to be involved in the re-initiation of DNA replication at repaired forks and/or dormant origins. Required for efficicient replication of the duplex region of the telomere. Promotes efficient replication of lagging-strand telomeres. Promotes general replication start following replication-fork stalling implicating new origin firing. May be in involved in C-strand fill-in during late S/G2 phase independent of its role in telomere duplex replication. This chain is CST complex subunit STN1, found in Rattus norvegicus (Rat).